The primary structure comprises 298 residues: MLSDDELTGLDEFALLAENAEQAGVNGPLPEVERVQAGAISALRWGGSAPRVIFLHGGGQNAHTWDTVIVGLGEPALAVDLPGHGHSAWREDGNYSPQLNSETLAPVLRELAPGAEFVVGMSLGGLTAIRLAAMAPDLVGELVLVDVTPSALQRHAELTAEQRGTVALMHGEREFPSFQAMLDLTIAAAPHRDVKSLRRGVFHNSRRLDNGNWVWRYDAIRTFGDFAGLWDDVDALSAPITLVRGGSSGFVTDQDTAELHRRATHFRGVHIVEKSGHSVQSDQPRALIEIVRGVLDTR.

S122 acts as the Nucleophile in catalysis. Active-site residues include D146 and H277.

Belongs to the AB hydrolase superfamily. As to quaternary structure, monomer.

The catalysed reaction is a carboxylic ester + H2O = an alcohol + a carboxylate + H(+). It carries out the reaction a butanoate ester + H2O = an aliphatic alcohol + butanoate + H(+). It catalyses the reaction an acetyl ester + H2O = an aliphatic alcohol + acetate + H(+). The enzyme catalyses a hexanoate ester + H2O = an aliphatic alcohol + hexanoate + H(+). The catalysed reaction is a tetradecanoate ester + H2O = an aliphatic alcohol + tetradecanoate + H(+). With respect to regulation, hydrolysis of a fluorogenic ester substrate (MOAME) is allosterically inhibited by divalent transition metal cations (Cu(2+), Zn(2+), Ni(2+) and Co(2+)). Inhibition is largely due to a two order of magnitude drop in kcat, with relatively little change in KM. The thermal stability decreases with increasing concentrations of Ni(2+). In terms of biological role, esterase likely involved in ester/lipid metabolism. Shows strong substrate selectivity toward short, straight chain alkyl esters with the highest activity toward four atom chains. The physiological substrate is unknown. Is able to hydrolyze ester bonds within a wide range of p-nitrophenyl derivatives (C2-C14) in vitro. The protein is Esterase Rv0045c of Mycobacterium tuberculosis (strain ATCC 25618 / H37Rv).